The following is a 455-amino-acid chain: Catalase-like protein (455 aa).

The interval 1–25 is disordered; sequence MSQQDKKLTGVFGHPVSDRENSMTA.

This sequence belongs to the catalase family.

Its function is as follows. Catalytically inactive. The polypeptide is Catalase-like protein (katB) (Staphylococcus aureus).